The sequence spans 341 residues: Phenylalanine--tRNA ligase alpha subunit (341 aa).

Glu256 lines the Mg(2+) pocket.

It belongs to the class-II aminoacyl-tRNA synthetase family. Phe-tRNA synthetase alpha subunit type 1 subfamily. Tetramer of two alpha and two beta subunits. Requires Mg(2+) as cofactor.

The protein resides in the cytoplasm. It carries out the reaction tRNA(Phe) + L-phenylalanine + ATP = L-phenylalanyl-tRNA(Phe) + AMP + diphosphate + H(+). The sequence is that of Phenylalanine--tRNA ligase alpha subunit from Leptospira interrogans serogroup Icterohaemorrhagiae serovar Lai (strain 56601).